A 252-amino-acid chain; its full sequence is Beta-crystallin B1 (252 aa).

2 stretches are compositionally biased toward low complexity: residues 1–15 (MSQAAKASASATVAV) and 24–37 (KGAPPAGTSPSPGT). Residues 1–42 (MSQAAKASASATVAVNPGPDTKGKGAPPAGTSPSPGTTLAPT) are disordered. Serine 2 carries the post-translational modification N-acetylserine. Residues 2–58 (SQAAKASASATVAVNPGPDTKGKGAPPAGTSPSPGTTLAPTTVPITSAKAAELPPGN) form an N-terminal arm region. Beta/gamma crystallin 'Greek key' domains follow at residues 59-98 (YRLVVFELENFQGRRAEFSGECSNLADRGFDRVRSIIVSA) and 99-143 (GPWV…RPIK). The interval 144–148 (MDAQE) is connecting peptide. Beta/gamma crystallin 'Greek key' domains are found at residues 149 to 190 (HKIS…KVSS) and 191 to 233 (GTWV…RRLR). Residues 235–252 (KQWHLEGSFPVLATEPPK) are C-terminal arm.

Belongs to the beta/gamma-crystallin family. Homo/heterodimer, or complexes of higher-order. The structure of beta-crystallin oligomers seems to be stabilized through interactions between the N-terminal arms. In terms of processing, specific cleavages in the N-terminal arm occur during lens maturation and give rise to truncated forms, leading to impaired oligomerization and protein insolubilization.

Its function is as follows. Crystallins are the dominant structural components of the vertebrate eye lens. The polypeptide is Beta-crystallin B1 (CRYBB1) (Homo sapiens (Human)).